The sequence spans 252 residues: MLAKRIIPCLDVKEGRVVKGVNFIGLQDVGDPVEIAEAYNEAGADEIVFLDITATHEGRKTIIDVVEKTAAKVFIPLTVGGGISSVKDMYNLLRAGADKVSINSAAVRNPKLIEEGAEHFGSQCIVVAIDARKVAEDKWNVYVNGGRVDTEMDAIEWAKRVVKLGAGEILLTSMDADGTKSGYDLRLTEEISKSVSIPVIASGGCGHTDHIIEVFQKTTVDAALAASIFHYGEATVQSVKRKLRDANVEVRL.

Catalysis depends on residues Asp11 and Asp130.

Belongs to the HisA/HisF family. In terms of assembly, heterodimer of HisH and HisF.

The protein resides in the cytoplasm. It carries out the reaction 5-[(5-phospho-1-deoxy-D-ribulos-1-ylimino)methylamino]-1-(5-phospho-beta-D-ribosyl)imidazole-4-carboxamide + L-glutamine = D-erythro-1-(imidazol-4-yl)glycerol 3-phosphate + 5-amino-1-(5-phospho-beta-D-ribosyl)imidazole-4-carboxamide + L-glutamate + H(+). It participates in amino-acid biosynthesis; L-histidine biosynthesis; L-histidine from 5-phospho-alpha-D-ribose 1-diphosphate: step 5/9. IGPS catalyzes the conversion of PRFAR and glutamine to IGP, AICAR and glutamate. The HisF subunit catalyzes the cyclization activity that produces IGP and AICAR from PRFAR using the ammonia provided by the HisH subunit. The sequence is that of Imidazole glycerol phosphate synthase subunit HisF from Bacillus cereus (strain G9842).